Consider the following 379-residue polypeptide: UDP-4-amino-4-deoxy-L-arabinose--oxoglutarate aminotransferase (379 aa).

Lys-182 is modified (N6-(pyridoxal phosphate)lysine).

The protein belongs to the DegT/DnrJ/EryC1 family. ArnB subfamily. Homodimer. Pyridoxal 5'-phosphate is required as a cofactor.

It catalyses the reaction UDP-4-amino-4-deoxy-beta-L-arabinose + 2-oxoglutarate = UDP-beta-L-threo-pentopyranos-4-ulose + L-glutamate. It participates in nucleotide-sugar biosynthesis; UDP-4-deoxy-4-formamido-beta-L-arabinose biosynthesis; UDP-4-deoxy-4-formamido-beta-L-arabinose from UDP-alpha-D-glucuronate: step 2/3. The protein operates within bacterial outer membrane biogenesis; lipopolysaccharide biosynthesis. Functionally, catalyzes the conversion of UDP-4-keto-arabinose (UDP-Ara4O) to UDP-4-amino-4-deoxy-L-arabinose (UDP-L-Ara4N). The modified arabinose is attached to lipid A and is required for resistance to polymyxin and cationic antimicrobial peptides. The protein is UDP-4-amino-4-deoxy-L-arabinose--oxoglutarate aminotransferase of Escherichia coli (strain K12 / DH10B).